Reading from the N-terminus, the 143-residue chain is Large ribosomal subunit protein uL11 (143 aa).

It belongs to the universal ribosomal protein uL11 family. As to quaternary structure, part of the ribosomal stalk of the 50S ribosomal subunit. Interacts with L10 and the large rRNA to form the base of the stalk. L10 forms an elongated spine to which L12 dimers bind in a sequential fashion forming a multimeric L10(L12)X complex. Post-translationally, one or more lysine residues are methylated.

Forms part of the ribosomal stalk which helps the ribosome interact with GTP-bound translation factors. This chain is Large ribosomal subunit protein uL11, found in Treponema denticola (strain ATCC 35405 / DSM 14222 / CIP 103919 / JCM 8153 / KCTC 15104).